The sequence spans 172 residues: 3-hydroxydecanoyl-[acyl-carrier-protein] dehydratase (172 aa).

Residue His71 is part of the active site.

The protein belongs to the thioester dehydratase family. FabA subfamily. In terms of assembly, homodimer.

The protein resides in the cytoplasm. The catalysed reaction is a (3R)-hydroxyacyl-[ACP] = a (2E)-enoyl-[ACP] + H2O. It catalyses the reaction (3R)-hydroxydecanoyl-[ACP] = (2E)-decenoyl-[ACP] + H2O. It carries out the reaction (2E)-decenoyl-[ACP] = (3Z)-decenoyl-[ACP]. It functions in the pathway lipid metabolism; fatty acid biosynthesis. In terms of biological role, necessary for the introduction of cis unsaturation into fatty acids. Catalyzes the dehydration of (3R)-3-hydroxydecanoyl-ACP to E-(2)-decenoyl-ACP and then its isomerization to Z-(3)-decenoyl-ACP. Can catalyze the dehydratase reaction for beta-hydroxyacyl-ACPs with saturated chain lengths up to 16:0, being most active on intermediate chain length. This is 3-hydroxydecanoyl-[acyl-carrier-protein] dehydratase from Escherichia coli O139:H28 (strain E24377A / ETEC).